A 452-amino-acid chain; its full sequence is Retinoid-inducible serine carboxypeptidase (452 aa).

Residues 1–26 (MELALRRSPVPRWLLLLPLLLGLNAG) form the signal peptide. N-linked (GlcNAc...) asparagine glycosylation is found at asparagine 64 and asparagine 126. Serine 167 is an active-site residue. Asparagine 362 carries N-linked (GlcNAc...) asparagine glycosylation. Residues aspartate 371 and histidine 431 contribute to the active site.

It belongs to the peptidase S10 family.

It localises to the secreted. May be involved in vascular wall and kidney homeostasis. The sequence is that of Retinoid-inducible serine carboxypeptidase (SCPEP1) from Homo sapiens (Human).